A 175-amino-acid chain; its full sequence is Alpha-crystallin B chain (175 aa).

At Met1 the chain carries N-acetylmethionine. Phosphoserine is present on residues Ser19, Ser45, and Ser59. Positions 56–164 constitute a sHSP domain; the sequence is RAPSWIDTGL…PERTIPITRE (109 aa). His83 serves as a coordination point for Zn(2+). Lys92 is modified (N6-acetyllysine). The Zn(2+) site is built by His104, Glu106, His111, and His119. Positions 142–175 are disordered; sequence VLTVNGPRKQASGPERTIPITREEKPAVTAAPKK. Lys166 is modified (N6-acetyllysine). The O-linked (GlcNAc) threonine glycan is linked to Thr170.

This sequence belongs to the small heat shock protein (HSP20) family. In terms of assembly, heteromer composed of three CRYAA and one CRYAB subunits. Aggregates with homologous proteins, including the small heat shock protein HSPB1, to form large heteromeric complexes. Inter-subunit bridging via zinc ions enhances stability, which is crucial as there is no protein turn over in the lens. Interacts with HSPBAP1. Interacts with TTN/titin. Interacts with TMEM109; in the cellular response to DNA damage. Interacts with DES; binds rapidly during early stages of DES filament assembly and a reduced binding seen in the later stages. Interacts with TMED10; the interaction mediates the translocation from the cytoplasm into the ERGIC (endoplasmic reticulum-Golgi intermediate compartment) and thereby secretion. Interacts with ATP6V1A and with MTOR, forming a ternary complex. As to expression, lens as well as other tissues.

It is found in the cytoplasm. Its subcellular location is the nucleus. The protein resides in the secreted. The protein localises to the lysosome. Functionally, may contribute to the transparency and refractive index of the lens. Has chaperone-like activity, preventing aggregation of various proteins under a wide range of stress conditions. In lens epithelial cells, stabilizes the ATP6V1A protein, preventing its degradation by the proteasome. In Rattus norvegicus (Rat), this protein is Alpha-crystallin B chain.